The following is a 395-amino-acid chain: Phosphopentomutase (395 aa).

Residues D10, D294, H299, D335, H336, and H347 each contribute to the Mn(2+) site.

It belongs to the phosphopentomutase family. Mn(2+) serves as cofactor.

It is found in the cytoplasm. The enzyme catalyses 2-deoxy-alpha-D-ribose 1-phosphate = 2-deoxy-D-ribose 5-phosphate. It catalyses the reaction alpha-D-ribose 1-phosphate = D-ribose 5-phosphate. The protein operates within carbohydrate degradation; 2-deoxy-D-ribose 1-phosphate degradation; D-glyceraldehyde 3-phosphate and acetaldehyde from 2-deoxy-alpha-D-ribose 1-phosphate: step 1/2. Functionally, isomerase that catalyzes the conversion of deoxy-ribose 1-phosphate (dRib-1-P) and ribose 1-phosphate (Rib-1-P) to deoxy-ribose 5-phosphate (dRib-5-P) and ribose 5-phosphate (Rib-5-P), respectively. The chain is Phosphopentomutase from Actinobacillus succinogenes (strain ATCC 55618 / DSM 22257 / CCUG 43843 / 130Z).